A 378-amino-acid polypeptide reads, in one-letter code: Calponin homolog OV9M (378 aa).

Residues 1–20 (MPAQPAQENAQDADDAQANA) show a composition bias toward low complexity. The disordered stretch occupies residues 1–35 (MPAQPAQENAQDADDAQANATMETRVAGQGQPKRV). 7 Calponin-like repeats span residues 50-75 (IPSQ…RNTQ), 98-123 (VRLQ…RDVC), 151-176 (VRLQ…RRET), 197-222 (IPLQ…RRET), 244-269 (IPSQ…RWEV), 285-310 (VRLQ…RNTT), and 330-355 (IPSQ…RDVK). The tract at residues 175–194 (ETTKMTDSKHPDYDHERPDQ) is disordered. The disordered stretch occupies residues 230–256 (HPEYDPESSIDSSTIPSQMGSNKYASQ). A compositionally biased stretch (polar residues) spans 238–256 (SIDSSTIPSQMGSNKYASQ). Residues 331–352 (PSQAGWNRGDSQKGMTGFGAPR) form a disordered region.

This sequence belongs to the calponin family. Found in the longitudinal muscles below the hypodermis.

In terms of biological role, could be involved in muscle contraction. The chain is Calponin homolog OV9M from Onchocerca volvulus.